A 117-amino-acid polypeptide reads, in one-letter code: Non-specific lipid-transfer protein 1 (117 aa).

The N-terminal stretch at 1 to 26 (MAYSAMTKLALVVALCMVVSVPIAQA) is a signal peptide. 4 disulfide bridges follow: Cys-29–Cys-76, Cys-39–Cys-53, Cys-54–Cys-99, and Cys-74–Cys-113.

This sequence belongs to the plant LTP family.

Functionally, plant non-specific lipid-transfer proteins transfer phospholipids as well as galactolipids across membranes. May play a role in wax or cutin deposition in the cell walls of expanding epidermal cells and certain secretory tissues. This Prunus dulcis (Almond) protein is Non-specific lipid-transfer protein 1.